The primary structure comprises 822 residues: Ribonucleoside-diphosphate reductase large subunit (822 aa).

Residues T249, 264–265 (SC), G295, 470–474 (NLCTE), and 651–655 (PTAAS) contribute to the substrate site. C265 and C487 are joined by a disulfide. Residue N470 is the Proton acceptor of the active site. C472 acts as the Cysteine radical intermediate in catalysis. The active-site Proton acceptor is E474.

The protein belongs to the ribonucleoside diphosphate reductase large chain family. As to quaternary structure, heterotetramer composed of a homodimer of the large subunit (R1) and a homodimer of the small subunit (R2). Larger multisubunit protein complex are also active, composed of (R1)n(R2)n.

The catalysed reaction is a 2'-deoxyribonucleoside 5'-diphosphate + [thioredoxin]-disulfide + H2O = a ribonucleoside 5'-diphosphate + [thioredoxin]-dithiol. Functionally, ribonucleoside-diphosphate reductase holoenzyme provides the precursors necessary for viral DNA synthesis. Allows virus growth in non-dividing cells, as well as reactivation from latency in infected hosts. Catalyzes the biosynthesis of deoxyribonucleotides from the corresponding ribonucleotides. This Gallus gallus (Chicken) protein is Ribonucleoside-diphosphate reductase large subunit.